We begin with the raw amino-acid sequence, 258 residues long: Short-chain dehydrogenase/reductase FrzI (258 aa).

NADP(+) contacts are provided by Ile-21, Asn-41, and Asn-94. Residues Ser-143 and Ser-144 each act as proton donor in the active site. Positions 157, 161, 191, and 193 each coordinate NADP(+). The Proton acceptor role is filled by Tyr-157. The active-site Lowers pKa of active site Tyr is the Lys-161.

Belongs to the short-chain dehydrogenases/reductases (SDR) family.

It catalyses the reaction (1S,3S,6S,7S,8R)-7-hydroxy-6-[(4-methoxyphenyl)methyl]-3-(methylamino)-5-azatricyclo[6.3.1.0(1,5)]dodecan-9-one + NADPH + H(+) = (1S,3S,6S,7S,8S,9S)-6-[(4-methoxyphenyl)methyl]-3-(methylamino)-5-azatricyclo[6.3.1.0(1,5)]dodecane-7,9-diol + NADP(+). It functions in the pathway secondary metabolite biosynthesis. In terms of biological role, short-chain dehydrogenase/reductase; part of the gene cluster that mediates the biosynthesis of the alkaloid (-)-FR901483, a potent immunosuppressant that shows efficacy in animal models and a probable inhibitor of purine nucleotide biosynthesis by targeting phosphoribosylpyrophosphate amidotransferase (PPAT). Within the pathway, FrzI catalyzes the formation of dephospho-(-)-FR901483 from the aza-tricyclic intermediate produced by FrzH. The biosynthesis of (-)-FR901483 starts with the condensation of two L-tyrosines to yield (S,S)-dityrosyl-piperazine. This process occurs in 3 steps with the non-canonical nonribosomal peptide synthetase FrzA catalyzing the reduction of L-tyrosine into L-tyrosinal, the spontaneous condensation of 2 L-tyrosinal units, and the subsequent reduction by the NmrA-like family domain-containing oxidoreductase FrzB. The cytochrome P450 monooxygenase FrzC then performs coupling between N10 and C1' to morph the piperazine into a 1,4-diazabicyclo[3.2.1]octane spiro-fused to a 2,5-cyclohexadienone. The dienone portion is further reduced to cyclohexanone by the flavin-dependent reductase FrzD. The methyltranserases (MTs) FrzE and FrzF are then involved in the methylation at the C10' amine and the C4 phenolic oxygen, respectively. The order of the two MTs appear to be interchangeable. Cleavage of the C9-N10' bond by the dioxygenase FrzG then leads to formation of a conjugated iminium. In addition to the oxidation of C9, an additional dehydrogenation between C7 and C8 can occur to give a likely shunt product. The next biosynthetic step is the intramolecular aldol condensation catalyzed by the newly identified aldolase FrzH to yield an aza-tricyclic product with the formation of a C9-C3' bond. The short-chain dehydrogenase/reductase FrzI then produces dephospho-(-)-FR901483 that is phosphorylated at C4'-OH into (-)-FR901483 by the phosphotransferase FrzJ. The chain is Short-chain dehydrogenase/reductase FrzI from Cladobotryum sp.